The chain runs to 116 residues: Nicotine metabolites export pump subunit NepA (116 aa).

4 consecutive transmembrane segments (helical) span residues 10–30, 42–62, 67–87, and 92–112; these read LTIW…TSLL, TVAV…ILKF, IAYA…GVLF, and FSWK…TLNL.

It belongs to the drug/metabolite transporter (DMT) superfamily. Small multidrug resistance (SMR) (TC 2.A.7.1) family. NepA/NepB subfamily. As to quaternary structure, the efflux pump is composed of NepA and NepB.

It is found in the cell membrane. Component of an efflux pump responsible for the transport of nicotine breakdown products, in particular methylamine, out of the cell. This pump apparently serves as a metabolic valve for nicotine catabolites and may protect the bacteria from the potentially toxic side effects of these compounds. This Paenarthrobacter nicotinovorans (Arthrobacter nicotinovorans) protein is Nicotine metabolites export pump subunit NepA (nepA).